The sequence spans 85 residues: Putative membrane protein insertion efficiency factor (85 aa).

It belongs to the UPF0161 family.

It localises to the cell membrane. Its function is as follows. Could be involved in insertion of integral membrane proteins into the membrane. This chain is Putative membrane protein insertion efficiency factor, found in Baumannia cicadellinicola subsp. Homalodisca coagulata.